Consider the following 262-residue polypeptide: Type III pantothenate kinase (262 aa).

An ATP-binding site is contributed by 9-16 (DIGNTNVK). Substrate-binding positions include Tyr-103 and 110–113 (GADR). Asp-112 serves as the catalytic Proton acceptor. Asp-134 contacts K(+). Thr-137 serves as a coordination point for ATP. Thr-190 lines the substrate pocket.

This sequence belongs to the type III pantothenate kinase family. Homodimer. NH4(+) is required as a cofactor. K(+) serves as cofactor.

It is found in the cytoplasm. It catalyses the reaction (R)-pantothenate + ATP = (R)-4'-phosphopantothenate + ADP + H(+). Its pathway is cofactor biosynthesis; coenzyme A biosynthesis; CoA from (R)-pantothenate: step 1/5. Catalyzes the phosphorylation of pantothenate (Pan), the first step in CoA biosynthesis. The chain is Type III pantothenate kinase from Nitratidesulfovibrio vulgaris (strain DSM 19637 / Miyazaki F) (Desulfovibrio vulgaris).